The following is a 29-amino-acid chain: Cytochrome b6-f complex subunit 8 (29 aa).

The helical transmembrane segment at 3 to 23 (ILALGWVSVLALFTWSIAMVV) threads the bilayer.

This sequence belongs to the PetN family. The 4 large subunits of the cytochrome b6-f complex are cytochrome b6, subunit IV (17 kDa polypeptide, PetD), cytochrome f and the Rieske protein, while the 4 small subunits are PetG, PetL, PetM and PetN. The complex functions as a dimer.

It is found in the cellular thylakoid membrane. Its function is as follows. Component of the cytochrome b6-f complex, which mediates electron transfer between photosystem II (PSII) and photosystem I (PSI), cyclic electron flow around PSI, and state transitions. The sequence is that of Cytochrome b6-f complex subunit 8 from Gloeothece citriformis (strain PCC 7424) (Cyanothece sp. (strain PCC 7424)).